Consider the following 115-residue polypeptide: Thionin-like protein 2 (115 aa).

An N-terminal signal peptide occupies residues methionine 1–alanine 20.

The protein belongs to the plant thionin (TC 1.C.44) family. Post-translationally, is disulfide-linked.

It localises to the secreted. Its function is as follows. May be involved in plant defense. This Arabidopsis thaliana (Mouse-ear cress) protein is Thionin-like protein 2.